A 126-amino-acid chain; its full sequence is Large ribosomal subunit protein bL12 (126 aa).

It belongs to the bacterial ribosomal protein bL12 family. As to quaternary structure, homodimer. Part of the ribosomal stalk of the 50S ribosomal subunit. Forms a multimeric L10(L12)X complex, where L10 forms an elongated spine to which 2 to 4 L12 dimers bind in a sequential fashion. Binds GTP-bound translation factors.

Forms part of the ribosomal stalk which helps the ribosome interact with GTP-bound translation factors. Is thus essential for accurate translation. The polypeptide is Large ribosomal subunit protein bL12 (Nitrosococcus oceani (strain ATCC 19707 / BCRC 17464 / JCM 30415 / NCIMB 11848 / C-107)).